Consider the following 156-residue polypeptide: Small ribosomal subunit protein uS7A/uS7B (156 aa).

This sequence belongs to the universal ribosomal protein uS7 family. In terms of assembly, part of the 30S ribosomal subunit. Contacts proteins S9 and S11.

In terms of biological role, one of the primary rRNA binding proteins, it binds directly to 16S rRNA where it nucleates assembly of the head domain of the 30S subunit. Is located at the subunit interface close to the decoding center, probably blocks exit of the E-site tRNA. The chain is Small ribosomal subunit protein uS7A/uS7B from Bartonella bacilliformis (strain ATCC 35685 / KC583 / Herrer 020/F12,63).